Here is a 236-residue protein sequence, read N- to C-terminus: Endonuclease V (236 aa).

Positions 47 and 115 each coordinate Mg(2+).

This sequence belongs to the endonuclease V family. Mg(2+) is required as a cofactor.

Its subcellular location is the cytoplasm. The enzyme catalyses Endonucleolytic cleavage at apurinic or apyrimidinic sites to products with a 5'-phosphate.. DNA repair enzyme involved in the repair of deaminated bases. Selectively cleaves double-stranded DNA at the second phosphodiester bond 3' to a deoxyinosine leaving behind the intact lesion on the nicked DNA. The protein is Endonuclease V of Xanthomonas campestris pv. campestris (strain B100).